We begin with the raw amino-acid sequence, 318 residues long: Glutathione synthetase (318 aa).

An ATP-grasp domain is found at Glu124–Glu310. Phe150–Gly207 contacts ATP. Mg(2+) is bound by residues Glu281 and Asn283.

Belongs to the prokaryotic GSH synthase family. It depends on Mg(2+) as a cofactor. Mn(2+) is required as a cofactor.

It catalyses the reaction gamma-L-glutamyl-L-cysteine + glycine + ATP = glutathione + ADP + phosphate + H(+). It functions in the pathway sulfur metabolism; glutathione biosynthesis; glutathione from L-cysteine and L-glutamate: step 2/2. This Vibrio cholerae serotype O1 (strain ATCC 39315 / El Tor Inaba N16961) protein is Glutathione synthetase.